A 182-amino-acid chain; its full sequence is Probable tyrosine phosphatase protein H4 (182 aa).

In terms of domain architecture, Tyrosine-protein phosphatase spans 1 to 182; it reads MEINKFICSQ…TVLKIQKSKI (182 aa). The active-site Phosphocysteine intermediate is cysteine 142.

This sequence belongs to the protein-tyrosine phosphatase family.

The catalysed reaction is O-phospho-L-tyrosyl-[protein] + H2O = L-tyrosyl-[protein] + phosphate. This Microplitis demolitor (Parasitoid wasp) protein is Probable tyrosine phosphatase protein H4 (H5).